The primary structure comprises 323 residues: Cyclin-D5-1 (323 aa).

Disordered regions lie at residues glutamate 17–proline 36 and histidine 281–leucine 323.

Belongs to the cyclin family. Cyclin D subfamily.

This Arabidopsis thaliana (Mouse-ear cress) protein is Cyclin-D5-1 (CYCD5-1).